The following is an 875-amino-acid chain: MSLNNITFCVSQDLDVPLKVKIKSLEGHKPLLKPSQKILNPELMLIGSNVFPSSDLIVSLQVFDKERNRNLTLPIYTPYIPFRNSRTWDYWLTLPIRIKQLTFSSHLRIILWEYNGSKQIPFFNLETSIFNLKDCTLKRGFESLKFRYDVIDHCEVVTDNKDQENLNKYFQGEFTRLPWLDEITISKLRKQRENRTWPQGTFVLNLEFPMLELPVVFIEREIMNTQMNIPTLKNNPGLSTDLREPNRNDPQIKISLGDKYHSTLKFYDPDQPNNDPIEEKYRRLERASKNANLDKQVKPDIKKRDYLNKIINYPPGTKLTAHEKGSIWKYRYYLMNNKKALTKLLQSTNLREESERVEVLELMDSWAEIDIDDALELLGSTFKNLSVRSYAVNRLKKASDKELELYLLQLVEAVCFENLSTFSDKSNSEFTIVDAVSSQKLSGDSMLLSTSHANQKLLKSISSESETSGTESLPIVISPLAEFLIRRALVNPRLGSFFYWYLKSESEDKPYLDQILSSFWSRLDKKSRNILNDQVRLINVLRECCETIKRLKDTTAKKMELLVHLLETKVRPLVKVRPIALPLDPDVLICDVCPETSKVFKSSLSPLKITFKTTLNQPYHLMFKVGDDLRQDQLVVQIISLMNELLKNENVDLKLTPYKILATGPQEGAIEFIPNDTLASILSKYHGILGYLKLHYPDENATLGVQGWVLDNFVKSCAGYCVITYILGVGDRHLDNLLVTPDGHFFHADFGYILGQDPKPFPPLMKLPPQIIEAFGGAESSNYDKFRSYCFVAYSILRRNAGLILNLFELMKTSNIPDIRIDPNGAILRVRERFNLNMSEEDATVHFQNLINDSVNALLPIVIDHLHNLAQYWRT.

Positions 14-188 (LDVPLKVKIK…WLDEITISKL (175 aa)) constitute a C2 PI3K-type domain. Residues 293 to 526 (LDKQVKPDIK…SSFWSRLDKK (234 aa)) form the PIK helical domain. The PI3K/PI4K catalytic domain maps to 593–859 (CPETSKVFKS…LINDSVNALL (267 aa)). The segment at 599–605 (VFKSSLS) is G-loop. The segment at 728–736 (GVGDRHLDN) is catalytic loop. The tract at residues 747–768 (HADFGYILGQDPKPFPPLMKLP) is activation loop.

This sequence belongs to the PI3/PI4-kinase family. As to quaternary structure, component of the autophagy-specific VPS34 PI3-kinase complex I composed of VPS15, VPS30, VPS34, ATG14 and ATG38, and of the VPS34 PI3-kinase complex II composed of VPS15, VPS30, VPS34 and VPS38. Interacts directly with ATG38. Interacts directly with VPS34. Autophosphorylated. Might also be phosphorylated by VPS15.

It localises to the golgi apparatus. The protein resides in the trans-Golgi network membrane. It is found in the endosome membrane. It carries out the reaction a 1,2-diacyl-sn-glycero-3-phospho-(1D-myo-inositol) + ATP = a 1,2-diacyl-sn-glycero-3-phospho-(1D-myo-inositol-3-phosphate) + ADP + H(+). Phosphatidylinositol 3-kinase activity is directly dependent on VPS15 protein kinase activity. Phosphatidylinositol 3-kinase required for cytoplasm to vacuole transport (Cvt) and autophagy as a part of the autophagy-specific VPS34 PI3-kinase complex I. This complex is essential to recruit the ATG8-phosphatidylinositol conjugate and the ATG12-ATG5 conjugate to the pre-autophagosomal structure. Also involved in endosome-to-Golgi retrograde transport as part of the VPS34 PI3-kinase complex II. This second complex is required for the endosome-to-Golgi retrieval of PEP1 and KEX2, and the recruitment of VPS5 and VPS7, two components of the retromer complex, to endosomal membranes (probably through the synthesis of a specific pool of phosphatidylinositol 3-phosphate recruiting the retromer to the endosomes). Its activation by VPS15 may lead to the phosphorylation of phosphatidylinositol in the sorting compartment membrane. Finally, it might also be involved in ethanol tolerance and cell wall integrity. In Saccharomyces cerevisiae (strain ATCC 204508 / S288c) (Baker's yeast), this protein is Phosphatidylinositol 3-kinase VPS34 (VPS34).